Consider the following 296-residue polypeptide: uncharacterized protein (296 aa).

Positions 1–20 (MKKLLLIIITVFFAFNVAQA) are cleaved as a signal peptide.

This is an uncharacterized protein from Rickettsia felis (strain ATCC VR-1525 / URRWXCal2) (Rickettsia azadi).